A 167-amino-acid polypeptide reads, in one-letter code: Shikimate kinase (167 aa).

Position 12-17 (Gly12–Thr17) interacts with ATP. Residue Thr16 coordinates Mg(2+). Asp34, Arg58, and Gly80 together coordinate substrate. Arg117 lines the ATP pocket. Residue Arg135 participates in substrate binding. Arg152 contributes to the ATP binding site.

It belongs to the shikimate kinase family. Monomer. Mg(2+) is required as a cofactor.

Its subcellular location is the cytoplasm. It carries out the reaction shikimate + ATP = 3-phosphoshikimate + ADP + H(+). It participates in metabolic intermediate biosynthesis; chorismate biosynthesis; chorismate from D-erythrose 4-phosphate and phosphoenolpyruvate: step 5/7. In terms of biological role, catalyzes the specific phosphorylation of the 3-hydroxyl group of shikimic acid using ATP as a cosubstrate. In Salinispora tropica (strain ATCC BAA-916 / DSM 44818 / JCM 13857 / NBRC 105044 / CNB-440), this protein is Shikimate kinase.